Reading from the N-terminus, the 505-residue chain is Protein disulfide-isomerase A3 (505 aa).

Positions 1 to 24 are cleaved as a signal peptide; it reads MRLRRLALFPGVALLLAAARLAAA. The Thioredoxin 1 domain maps to 25 to 133; the sequence is SDVLELTDDN…IVSHLKKQAG (109 aa). Residues C57 and C60 each act as nucleophile in the active site. C57 and C60 are disulfide-bonded. K61 is modified (N6-methyllysine). A disulfide bridge connects residues C85 and C92. N6-succinyllysine is present on K129. K152 carries the post-translational modification N6-acetyllysine. K218 carries the post-translational modification N6-succinyllysine. N6-acetyllysine is present on K252. Phosphothreonine is present on T319. The Thioredoxin 2 domain maps to 343–485; that stretch reads SRDGKALERF…FISYLQREAT (143 aa). K362 is subject to N6-acetyllysine. Residues C406 and C409 each act as nucleophile in the active site. The cysteines at positions 406 and 409 are disulfide-linked. A disordered region spans residues 484–505; it reads ATNPPVIQEEKPKKKKKAQEDL. Over residues 491 to 505 the composition is skewed to basic and acidic residues; the sequence is QEEKPKKKKKAQEDL. K494 carries the N6-acetyllysine modification. A Prevents secretion from ER motif is present at residues 502 to 505; that stretch reads QEDL.

Part of the major histocompatibility complex class I (MHC I) peptide loading complex composed of TAP1, TAP2, B2M, MHC heavy chain, TAPBP, PDIA3, and CALR. Interacts with ERP27 and CANX. Interacts with SERPINA2 and with the S and Z variants of SERPINA1. Interacts with ATP2A2. Within the major histocompatibility complex class I (MHC I) peptide loading complex forms reversible disulfide-linked heterodimers with TAPBP as part of its protein folding chaperone activity. This is essential to assist the dynamic assembly of the MHC I complex with high affinity antigens in the endoplasmic reticulum. Post-translationally, phosphorylated. In terms of tissue distribution, detected in the flagellum and head region of spermatozoa (at protein level). Expressed in liver, stomach and colon (at protein level). Expressed in gastric parietal cells and chief cells (at protein level).

The protein localises to the endoplasmic reticulum. Its subcellular location is the endoplasmic reticulum lumen. The protein resides in the melanosome. It carries out the reaction Catalyzes the rearrangement of -S-S- bonds in proteins.. With respect to regulation, association with calcitriol does not affect its enzymatic activity. Functionally, protein disulfide isomerase that catalyzes the formation, isomerization, and reduction or oxidation of disulfide bonds in client proteins and functions as a protein folding chaperone. Core component of the major histocompatibility complex class I (MHC I) peptide loading complex where it functions as an essential folding chaperone for TAPBP. Through TAPBP, assists the dynamic assembly of the MHC I complex with high affinity antigens in the endoplasmic reticulum. Therefore, plays a crucial role in the presentation of antigens to cytotoxic T cells in adaptive immunity. This Homo sapiens (Human) protein is Protein disulfide-isomerase A3.